Reading from the N-terminus, the 199-residue chain is Transgelin-3 (199 aa).

Residues 24-136 (ADLENKLVDW…RTLMALGSVA (113 aa)) enclose the Calponin-homology (CH) domain. Phosphoserine is present on Ser163. One copy of the Calponin-like repeat lies at 174–199 (IGLQMGSNKGASQAGMTGYGMPRQIM). Polar residues predominate over residues 178–188 (MGSNKGASQAG). The segment at 178 to 199 (MGSNKGASQAGMTGYGMPRQIM) is disordered.

The protein belongs to the calponin family.

This chain is Transgelin-3 (Tagln3), found in Mus musculus (Mouse).